The sequence spans 256 residues: Imidazole glycerol phosphate synthase subunit HisF (256 aa).

Catalysis depends on residues Asp11 and Asp130.

Belongs to the HisA/HisF family. As to quaternary structure, heterodimer of HisH and HisF.

The protein localises to the cytoplasm. The enzyme catalyses 5-[(5-phospho-1-deoxy-D-ribulos-1-ylimino)methylamino]-1-(5-phospho-beta-D-ribosyl)imidazole-4-carboxamide + L-glutamine = D-erythro-1-(imidazol-4-yl)glycerol 3-phosphate + 5-amino-1-(5-phospho-beta-D-ribosyl)imidazole-4-carboxamide + L-glutamate + H(+). Its pathway is amino-acid biosynthesis; L-histidine biosynthesis; L-histidine from 5-phospho-alpha-D-ribose 1-diphosphate: step 5/9. IGPS catalyzes the conversion of PRFAR and glutamine to IGP, AICAR and glutamate. The HisF subunit catalyzes the cyclization activity that produces IGP and AICAR from PRFAR using the ammonia provided by the HisH subunit. This is Imidazole glycerol phosphate synthase subunit HisF from Prochlorococcus marinus (strain MIT 9301).